Consider the following 60-residue polypeptide: Temporin-MT5 (60 aa).

An N-terminal signal peptide occupies residues 1 to 22; sequence MFTLKKPLLLLFFLATINLSLC. Residues 23 to 44 constitute a propeptide, removed in mature form; it reads EQERNAEEERRDEPDERNAEVE. At Phe-58 the chain carries Phenylalanine amide.

The protein belongs to the frog skin active peptide (FSAP) family. Temporin subfamily. Expressed by the skin glands.

The protein localises to the secreted. Functionally, antimicrobial peptide. This Amolops mantzorum (Sichuan torrent frog) protein is Temporin-MT5.